Consider the following 165-residue polypeptide: MPAESTFDIVSDFERQELVNAIDQARREVATRYDLKDTKTEIVLSEKELTITTESEMHLAAVRDLVQTKALRRNLSIKIFKFGPVQEVSGGRVRQVATLQRGIPEDVAKKLAKLIRDHFPKVQPRIQGDALRVGSKSRDELQAVIRLVKERQDEFDIPLQFTNYR.

The protein belongs to the YajQ family.

Nucleotide-binding protein. The polypeptide is Nucleotide-binding protein Rcas_1283 (Roseiflexus castenholzii (strain DSM 13941 / HLO8)).